Consider the following 133-residue polypeptide: MRHKYRKGSSFERELKRLLEKEGFAVIRSAGSKGVDLIAGRKGEVLIFECKTSSKTKFYINKEDIEKLISFSEIFGGKPYLAIKFNGEMLFINPFLLSTNGKNYVIDERIKAIAIDFYEVIGRGKQLKIDDLI.

Glutamate 12 serves as a coordination point for Mg(2+). Serine 32 is an active-site residue. Positions 36 and 49 each coordinate Mg(2+).

It belongs to the Holliday junction resolvase Hjc family. Homodimer. Requires Mg(2+) as cofactor.

The enzyme catalyses Endonucleolytic cleavage at a junction such as a reciprocal single-stranded crossover between two homologous DNA duplexes (Holliday junction).. Its function is as follows. A structure-specific endonuclease that resolves Holliday junction (HJ) intermediates during genetic recombination. Cleaves 4-way DNA junctions introducing paired nicks in opposing strands, leaving a 5'-terminal phosphate and a 3'-terminal hydroxyl group that are subsequently ligated to produce recombinant products. This is Crossover junction endodeoxyribonuclease Hjc from Methanocaldococcus jannaschii (strain ATCC 43067 / DSM 2661 / JAL-1 / JCM 10045 / NBRC 100440) (Methanococcus jannaschii).